The chain runs to 478 residues: MAAVNGVGISWPSKLTQGQRPKLVFSPSPRRCTPSSSTIKMTASVDEKKKTFTLQKSEEAFSKAKELMPGGVNSPVRAFKSVGGQPIIIDSVKGSRMRDIDGNEYIDYVGSWGPAIIGHADDEVLAALAETMKKGTSFGAPCLLENTLAEMVISAVPSIEMVRFVNSGTEACMGVLRLARAFTGRPKIIKFEGCYHGHADPFLVKAGSGVATLGLPDSPGGPKAATSDTLTAPYNDISAVESLFEEHKGEVAAIILEPVVGNAGFIQPNLDFLAAIRKITKENDALLIFDEVMTGFRLAYGGAQEYFGITPDLTTLGKIIGGGLPVGAYGGRRDIMEMVAPAGPMYQAGTLSGNPLAMTAGIHTLKRLQGPGTYEYLDKITGELTQGILDAGKKTGHAMCGGYIRGMFGFLFAEGPVNNFSDAKKSDTEKFGRFYRGMLEEGVYFAPSQFEAGFTSLAHTSEDIQKTVAAAEKVLKQI.

N6-(pyridoxal phosphate)lysine is present on Lys318.

Belongs to the class-III pyridoxal-phosphate-dependent aminotransferase family. HemL subfamily. As to quaternary structure, homodimer. Pyridoxal 5'-phosphate serves as cofactor.

It localises to the plastid. The protein resides in the chloroplast. It carries out the reaction (S)-4-amino-5-oxopentanoate = 5-aminolevulinate. It participates in porphyrin-containing compound metabolism; protoporphyrin-IX biosynthesis; 5-aminolevulinate from L-glutamyl-tRNA(Glu): step 2/2. Its pathway is porphyrin-containing compound metabolism; chlorophyll biosynthesis. The polypeptide is Glutamate-1-semialdehyde 2,1-aminomutase, chloroplastic (GSA) (Nicotiana tabacum (Common tobacco)).